Reading from the N-terminus, the 359-residue chain is Ni-sirohydrochlorin a,c-diamide reductive cyclase complex, component CfbD (359 aa).

This sequence belongs to the NifD/NifK/NifE/NifN family. In terms of assembly, homodimer or monomer. The Ni-sirohydrochlorin a,c-diamide reductive cyclase complex is composed of a NifH homolog component CfbC and a NifD homolog component CfbD. [4Fe-4S] cluster serves as cofactor.

It carries out the reaction Ni-sirohydrochlorin a,c-diamide + 3 AH2 + ATP + H2O = 15,17(3)-seco-F430-17(3)-acid + 3 A + ADP + phosphate. Its function is as follows. Involved in the biosynthesis of the unique nickel-containing tetrapyrrole coenzyme F430, the prosthetic group of methyl-coenzyme M reductase (MCR), which plays a key role in methanogenesis and anaerobic methane oxidation. Catalyzes both the six-electron reduction of the tetrahydroporphyrin ring system and the gamma-lactamization of the c-acetamide side chain of Ni-sirohydrochlorin a,c-diamide to yield 15,17(3)-seco-F430-17(3)-acid (seco-F430), the last intermediate in the biosynthesis of the coenzyme F430. This is Ni-sirohydrochlorin a,c-diamide reductive cyclase complex, component CfbD from Methanothermobacter thermautotrophicus (strain ATCC 29096 / DSM 1053 / JCM 10044 / NBRC 100330 / Delta H) (Methanobacterium thermoautotrophicum).